The primary structure comprises 135 residues: Small ribosomal subunit protein bS6 (135 aa).

Positions Glu99–Glu135 are disordered.

The protein belongs to the bacterial ribosomal protein bS6 family.

In terms of biological role, binds together with bS18 to 16S ribosomal RNA. In Bartonella tribocorum (strain CIP 105476 / IBS 506), this protein is Small ribosomal subunit protein bS6.